Reading from the N-terminus, the 277-residue chain is uncharacterized protein (277 aa).

The tract at residues 1–20 is disordered; sequence MVTTSPPPTLTNSVQPHPTT.

This is an uncharacterized protein from Acidianus convivator (ATV).